A 345-amino-acid chain; its full sequence is Tetraacyldisaccharide 4'-kinase (345 aa).

ATP is bound at residue 54 to 61 (TLGGAGKT).

This sequence belongs to the LpxK family.

The enzyme catalyses a lipid A disaccharide + ATP = a lipid IVA + ADP + H(+). It participates in glycolipid biosynthesis; lipid IV(A) biosynthesis; lipid IV(A) from (3R)-3-hydroxytetradecanoyl-[acyl-carrier-protein] and UDP-N-acetyl-alpha-D-glucosamine: step 6/6. Its function is as follows. Transfers the gamma-phosphate of ATP to the 4'-position of a tetraacyldisaccharide 1-phosphate intermediate (termed DS-1-P) to form tetraacyldisaccharide 1,4'-bis-phosphate (lipid IVA). This Allorhizobium ampelinum (strain ATCC BAA-846 / DSM 112012 / S4) (Agrobacterium vitis (strain S4)) protein is Tetraacyldisaccharide 4'-kinase.